Reading from the N-terminus, the 305-residue chain is UDP-3-O-acyl-N-acetylglucosamine deacetylase (305 aa).

Zn(2+) is bound by residues His78, His237, and Asp241. The active-site Proton donor is the His264.

The protein belongs to the LpxC family. The cofactor is Zn(2+).

It carries out the reaction a UDP-3-O-[(3R)-3-hydroxyacyl]-N-acetyl-alpha-D-glucosamine + H2O = a UDP-3-O-[(3R)-3-hydroxyacyl]-alpha-D-glucosamine + acetate. The protein operates within glycolipid biosynthesis; lipid IV(A) biosynthesis; lipid IV(A) from (3R)-3-hydroxytetradecanoyl-[acyl-carrier-protein] and UDP-N-acetyl-alpha-D-glucosamine: step 2/6. Functionally, catalyzes the hydrolysis of UDP-3-O-myristoyl-N-acetylglucosamine to form UDP-3-O-myristoylglucosamine and acetate, the committed step in lipid A biosynthesis. This Cupriavidus necator (strain ATCC 17699 / DSM 428 / KCTC 22496 / NCIMB 10442 / H16 / Stanier 337) (Ralstonia eutropha) protein is UDP-3-O-acyl-N-acetylglucosamine deacetylase.